Reading from the N-terminus, the 401-residue chain is CinA-like protein (401 aa).

The protein belongs to the CinA family.

The sequence is that of CinA-like protein from Thermosipho melanesiensis (strain DSM 12029 / CIP 104789 / BI429).